The sequence spans 241 residues: Large ribosomal subunit protein uL1 (241 aa).

The protein belongs to the universal ribosomal protein uL1 family. As to quaternary structure, part of the 50S ribosomal subunit.

Functionally, binds directly to 23S rRNA. The L1 stalk is quite mobile in the ribosome, and is involved in E site tRNA release. Its function is as follows. Protein L1 is also a translational repressor protein, it controls the translation of the L11 operon by binding to its mRNA. The polypeptide is Large ribosomal subunit protein uL1 (Streptomyces coelicolor (strain ATCC BAA-471 / A3(2) / M145)).